Here is a 193-residue protein sequence, read N- to C-terminus: MAFIISIIIAYLLGSLSFAVIVAKLMKLPDPRTTGSGNAGATNMLRVGGRQAAFYVLLGDAAKGLIAVLIARFLNVQGVSLAFVGLVAVLGHLFPVYFKFRGGKGVATMMGVLLGLSFWIALFVIATWVIVVSIFRYSSVAALVSAVAAPIYTIIAGRTDYLFPVLIIAILLIWKHWENFQRLRKGTEDKVKL.

The next 5 membrane-spanning stretches (helical) occupy residues 2-22 (AFIISIIIAYLLGSLSFAVIV), 51-71 (QAAFYVLLGDAAKGLIAVLIA), 78-98 (GVSLAFVGLVAVLGHLFPVYF), 112-132 (VLLGLSFWIALFVIATWVIVV), and 154-174 (IIAGRTDYLFPVLIIAILLIW).

It belongs to the PlsY family. In terms of assembly, probably interacts with PlsX.

The protein localises to the cell inner membrane. The catalysed reaction is an acyl phosphate + sn-glycerol 3-phosphate = a 1-acyl-sn-glycero-3-phosphate + phosphate. It participates in lipid metabolism; phospholipid metabolism. Catalyzes the transfer of an acyl group from acyl-phosphate (acyl-PO(4)) to glycerol-3-phosphate (G3P) to form lysophosphatidic acid (LPA). This enzyme utilizes acyl-phosphate as fatty acyl donor, but not acyl-CoA or acyl-ACP. The protein is Glycerol-3-phosphate acyltransferase of Coxiella burnetii (strain CbuG_Q212) (Coxiella burnetii (strain Q212)).